Reading from the N-terminus, the 325-residue chain is Apoptosis-enhancing nuclease (325 aa).

A Nucleolar localization signal motif is present at residues 27 to 35; sequence RKRHKRRSR. The tract at residues 85–105 is disordered; that stretch reads RAGSGSAPCSRRPAPGKASGP. In terms of domain architecture, Exonuclease spans 110-266; it reads CVAIDCEMVG…EDATTAMELY (157 aa). The short motif at 165–188 is the Nuclear localization signal element; it reads RQHMRKAVPFQVAQKEILKLLKGK. Residues 281–325 form a disordered region; it reads LWTCPEDREPDSSTDMEQYMEDQYWPDDLAHGSRGGAREAQDRRN. Positions 308–325 are enriched in basic and acidic residues; that stretch reads DLAHGSRGGAREAQDRRN.

The protein localises to the nucleus. It localises to the nucleolus. Exonuclease with activity against single- and double-stranded DNA and RNA. Mediates p53-induced apoptosis. When induced by p53 following DNA damage, digests double-stranded DNA to form single-stranded DNA and amplifies DNA damage signals, leading to enhancement of apoptosis. The chain is Apoptosis-enhancing nuclease (AEN) from Homo sapiens (Human).